The primary structure comprises 426 residues: Protein FAM181B (426 aa).

Disordered regions lie at residues 106 to 157 (GLMG…AAAA) and 226 to 246 (NLPP…CGPS). Positions 128 to 141 (PLAAPSAPTVAAPA) are enriched in low complexity.

The protein belongs to the FAM181 family.

The sequence is that of Protein FAM181B (FAM181B) from Homo sapiens (Human).